A 184-amino-acid polypeptide reads, in one-letter code: Probable chemoreceptor glutamine deamidase CheD (184 aa).

Belongs to the CheD family.

It carries out the reaction L-glutaminyl-[protein] + H2O = L-glutamyl-[protein] + NH4(+). Probably deamidates glutamine residues to glutamate on methyl-accepting chemotaxis receptors (MCPs), playing an important role in chemotaxis. This is Probable chemoreceptor glutamine deamidase CheD from Rhizobium leguminosarum bv. trifolii (strain WSM2304).